Reading from the N-terminus, the 476-residue chain is Adenosylhomocysteinase (476 aa).

Substrate is bound by residues Thr-67, Asp-142, and Glu-202. 203–205 (TTT) provides a ligand contact to NAD(+). Substrate-binding residues include Lys-232 and Asp-236. NAD(+)-binding positions include Asn-237, 266 to 271 (GYGDVG), Glu-289, Asn-324, 345 to 347 (IGH), and Asn-390.

Belongs to the adenosylhomocysteinase family. Requires NAD(+) as cofactor.

It is found in the cytoplasm. It catalyses the reaction S-adenosyl-L-homocysteine + H2O = L-homocysteine + adenosine. It functions in the pathway amino-acid biosynthesis; L-homocysteine biosynthesis; L-homocysteine from S-adenosyl-L-homocysteine: step 1/1. May play a key role in the regulation of the intracellular concentration of adenosylhomocysteine. The protein is Adenosylhomocysteinase of Parasynechococcus marenigrum (strain WH8102).